Here is a 690-residue protein sequence, read N- to C-terminus: BURP domain-containing protein 14 (690 aa).

The first 26 residues, 1 to 26 (MAPPRHARLVAATIAVLLCHLPRSAA), serve as a signal peptide directing secretion. A disordered region spans residues 134 to 163 (GSSWSKSSSDGDGAAAAAAPAGGGGGGGGG). The span at 135 to 153 (SSWSKSSSDGDGAAAAAAP) shows a compositional bias: low complexity. A compositionally biased stretch (gly residues) spans 154 to 163 (AGGGGGGGGG). A glycan (N-linked (GlcNAc...) asparagine) is linked at N178. Residues 201–211 (SNGGGGGGGGV) show a composition bias toward gly residues. The tract at residues 201-232 (SNGGGGGGGGVDSFRRYGKGSQGRNDSFTSYE) is disordered. 6 N-linked (GlcNAc...) asparagine glycosylation sites follow: N225, N317, N379, N432, N450, and N601. The BURP domain maps to 477–689 (FFRERDLVAG…FQGDMTWTVA (213 aa)).

In terms of tissue distribution, expressed in panicles.

The polypeptide is BURP domain-containing protein 14 (BURP14) (Oryza sativa subsp. japonica (Rice)).